The chain runs to 463 residues: A-type ATP synthase subunit B (463 aa).

The protein belongs to the ATPase alpha/beta chains family. Has multiple subunits with at least A(3), B(3), C, D, E, F, H, I and proteolipid K(x).

It localises to the cell membrane. Functionally, component of the A-type ATP synthase that produces ATP from ADP in the presence of a proton gradient across the membrane. The B chain is a regulatory subunit. This Thermococcus sp. (strain KI) protein is A-type ATP synthase subunit B.